The sequence spans 892 residues: Ataxin-7 (892 aa).

Residues 1–15 (MSERAADDVRGEPRR) are compositionally biased toward basic and acidic residues. 2 disordered regions span residues 1–74 (MSER…SAAA) and 195–247 (SKGG…SRVP). Over residues 16–38 (AAAAAGGAAAAAARQQQQQQQQQ) the composition is skewed to low complexity. Positions 39–55 (QPPPPQPQRQQHPPPPP) are enriched in pro residues. Residues 195–222 (SKGGSASGSNRSSSGGVLSASSSSSKLL) show a composition bias toward low complexity. Lys257 participates in a covalent cross-link: Glycyl lysine isopeptide (Lys-Gly) (interchain with G-Cter in SUMO); alternate. Residue Lys257 forms a Glycyl lysine isopeptide (Lys-Gly) (interchain with G-Cter in SUMO2); alternate linkage. Disordered regions lie at residues 298–328 (PTLP…NSNN), 389–505 (HKNK…ESVE), 616–730 (KSVP…SSHS), and 818–892 (SHGS…KARP). 2 stretches are compositionally biased toward basic and acidic residues: residues 318–327 (LEKKPEDNSN) and 389–403 (HKNK…RHPD). An SCA7 domain is found at 334–401 (KRLSEREFDP…KTREKELIRH (68 aa)). Pro residues-rich tracts occupy residues 405-419 (QQPP…PAPP), 448-458 (HTPSLPRPPGC), and 468-483 (IDPP…PLPA). Acidic residues predominate over residues 493–502 (EEGEGDDKEE). Residues 616–629 (KSVPAHGTTLNAQP) show a composition bias toward polar residues. The span at 640–669 (SMQSRQVSSSSSSPSTPSGLSSVPSSPMSR) shows a compositional bias: low complexity. A compositionally biased stretch (basic residues) spans 670–680 (KPQKLKSSKSL). Residues 685–695 (SSGNSTNCQNA) are compositionally biased toward polar residues. Composition is skewed to low complexity over residues 716–730 (HSSS…SSHS) and 840–851 (SPSSSSINNSSS).

The protein belongs to the ataxin-7 family. Component of the SAGA transcription coactivator-HAT complex, at least composed of SUPT3H, GCN5L2, TAF5L, TAF6L, SUPT7L, TADA3L, TAD1L, TAF10, TAF12, TRRAP, TAF9 and ATXN7. The STAGA core complex is associated with a subcomplex required for histone deubiquitination composed of ATXN7L3, ENY2 and USP22. Interacts with SORBS1, PSMC1 and CRX. Interacts with TRRAP, GCN5L2 and TAF10. Interacts with alpha tubulin. In terms of processing, proteolytically cleaved by caspase-7 (CASP7). The cleavage may be involved in SCA7 degeneration: the isoform fragments may exert distinct toxic influences that could contribute to selective neurodegeneration. Sumoylation decreases the aggregation propensity and cellular toxicity of forms with an expanded poly-Gln region but has no effect on subcellular location or interaction with components of the STAGA complex. In terms of tissue distribution, isoform a is expressed in CNS, but is expressed predominantly in the peripherical tissues. Isoform b is expressed in CNS. Also highly expressed in the frontal lobe, skeletal muscle and spinal cord and is expressed at a lower level in the lung, lymphoblast and intestine.

The protein localises to the nucleus. It is found in the nucleolus. The protein resides in the nucleus matrix. Its subcellular location is the cytoplasm. It localises to the cytoskeleton. Functionally, acts as a component of the SAGA (aka STAGA) transcription coactivator-HAT complex. Mediates the interaction of SAGA complex with the CRX and is involved in CRX-dependent gene activation. Probably involved in tethering the deubiquitination module within the SAGA complex. Necessary for microtubule cytoskeleton stabilization. Involved in neurodegeneration. In Homo sapiens (Human), this protein is Ataxin-7 (ATXN7).